A 409-amino-acid polypeptide reads, in one-letter code: Accessory Sec system protein translocase subunit SecY2 (409 aa).

Helical transmembrane passes span 16–36, 61–81, 104–124, 132–152, 161–181, 190–210, 242–262, 286–306, 341–361, and 374–394; these read ILITFSLIIIFLLGRYVPIPG, LSQVGVFSLGIGPMMTTMILL, VVMLVIAIIQGLAIAISFQYH, LLLATMILVTGAYIISWIGNL, MTILVVVGMLVGQFNNIPLIF, LAIILFLLWTLVAMYLMITFE, GMAFMYVYTLLMFPQYIIILL, GVVIYMILMLVLSVAFTFVNI, LFGTFSGFFMAFLGGVPLLFA, and TGIFMMITGMSFMILDEFQVI.

This sequence belongs to the SecY/SEC61-alpha family. SecY2 subfamily. Component of the accessory SecA2/SecY2 protein translocase complex required to export cell wall proteins. May form heterotrimers with SecE and SecG subunits.

The protein resides in the cell membrane. Functionally, part of the accessory SecA2/SecY2 system specifically required for export of possible cell wall proteins. The central subunit of a protein translocation channel. This Streptococcus agalactiae serotype Ia (strain ATCC 27591 / A909 / CDC SS700) protein is Accessory Sec system protein translocase subunit SecY2.